Consider the following 227-residue polypeptide: Phosphoribosylformylglycinamidine synthase subunit PurQ (227 aa).

The region spanning 3-225 (FAVIVLPGSN…VKNWRETHVA (223 aa)) is the Glutamine amidotransferase type-1 domain. Catalysis depends on Cys86, which acts as the Nucleophile. Residues His194 and Glu196 contribute to the active site.

In terms of assembly, part of the FGAM synthase complex composed of 1 PurL, 1 PurQ and 2 PurS subunits.

The protein resides in the cytoplasm. The enzyme catalyses N(2)-formyl-N(1)-(5-phospho-beta-D-ribosyl)glycinamide + L-glutamine + ATP + H2O = 2-formamido-N(1)-(5-O-phospho-beta-D-ribosyl)acetamidine + L-glutamate + ADP + phosphate + H(+). It catalyses the reaction L-glutamine + H2O = L-glutamate + NH4(+). Its pathway is purine metabolism; IMP biosynthesis via de novo pathway; 5-amino-1-(5-phospho-D-ribosyl)imidazole from N(2)-formyl-N(1)-(5-phospho-D-ribosyl)glycinamide: step 1/2. Part of the phosphoribosylformylglycinamidine synthase complex involved in the purines biosynthetic pathway. Catalyzes the ATP-dependent conversion of formylglycinamide ribonucleotide (FGAR) and glutamine to yield formylglycinamidine ribonucleotide (FGAM) and glutamate. The FGAM synthase complex is composed of three subunits. PurQ produces an ammonia molecule by converting glutamine to glutamate. PurL transfers the ammonia molecule to FGAR to form FGAM in an ATP-dependent manner. PurS interacts with PurQ and PurL and is thought to assist in the transfer of the ammonia molecule from PurQ to PurL. This chain is Phosphoribosylformylglycinamidine synthase subunit PurQ, found in Bacillus licheniformis (strain ATCC 14580 / DSM 13 / JCM 2505 / CCUG 7422 / NBRC 12200 / NCIMB 9375 / NCTC 10341 / NRRL NRS-1264 / Gibson 46).